A 238-amino-acid polypeptide reads, in one-letter code: tRNA (guanine-N(7)-)-methyltransferase (238 aa).

Glutamate 68, glutamate 93, aspartate 120, and aspartate 143 together coordinate S-adenosyl-L-methionine. Aspartate 143 is an active-site residue. Substrate is bound by residues lysine 147, aspartate 179, and 216-219 (TKFE).

This sequence belongs to the class I-like SAM-binding methyltransferase superfamily. TrmB family.

The enzyme catalyses guanosine(46) in tRNA + S-adenosyl-L-methionine = N(7)-methylguanosine(46) in tRNA + S-adenosyl-L-homocysteine. Its pathway is tRNA modification; N(7)-methylguanine-tRNA biosynthesis. Catalyzes the formation of N(7)-methylguanine at position 46 (m7G46) in tRNA. The polypeptide is tRNA (guanine-N(7)-)-methyltransferase (Stutzerimonas stutzeri (strain A1501) (Pseudomonas stutzeri)).